The sequence spans 941 residues: Cell wall protein IFF9 (941 aa).

Residues 1-20 (MQLFQNILVSIALLTQIVFA) form the signal peptide. Asparagine 917 is lipidated: GPI-anchor amidated asparagine. Residues 918 to 941 (GSNKESIENIKYLALVVFGLMMFM) constitute a propeptide, removed in mature form.

It belongs to the HYR1/IFF family. In terms of processing, the GPI-anchor is attached to the protein in the endoplasmic reticulum and serves to target the protein to the cell surface. There, the glucosamine-inositol phospholipid moiety is cleaved off and the GPI-modified mannoprotein is covalently attached via its lipidless GPI glycan remnant to the 1,6-beta-glucan of the outer cell wall layer.

The protein resides in the secreted. The protein localises to the cell wall. It is found in the membrane. Its function is as follows. GPI-anchored cell wall protein involved in cell wall organization, hyphal growth, as well as in host-fungal interaction and virulence. This is Cell wall protein IFF9 (IFF9) from Candida albicans (strain SC5314 / ATCC MYA-2876) (Yeast).